Reading from the N-terminus, the 342-residue chain is Anthranilate phosphoribosyltransferase (342 aa).

5-phospho-alpha-D-ribose 1-diphosphate contacts are provided by residues Gly90, 93 to 94 (GD), Thr98, 100 to 103 (NIST), 118 to 126 (KHGNRSVSS), and Ala130. Gly90 lines the anthranilate pocket. Ser102 contributes to the Mg(2+) binding site. Position 121 (Asn121) interacts with anthranilate. Anthranilate is bound at residue Arg176. Residues Asp234 and Glu235 each coordinate Mg(2+).

This sequence belongs to the anthranilate phosphoribosyltransferase family. Homodimer. Mg(2+) is required as a cofactor.

The catalysed reaction is N-(5-phospho-beta-D-ribosyl)anthranilate + diphosphate = 5-phospho-alpha-D-ribose 1-diphosphate + anthranilate. The protein operates within amino-acid biosynthesis; L-tryptophan biosynthesis; L-tryptophan from chorismate: step 2/5. In terms of biological role, catalyzes the transfer of the phosphoribosyl group of 5-phosphorylribose-1-pyrophosphate (PRPP) to anthranilate to yield N-(5'-phosphoribosyl)-anthranilate (PRA). This is Anthranilate phosphoribosyltransferase from Mannheimia succiniciproducens (strain KCTC 0769BP / MBEL55E).